A 145-amino-acid chain; its full sequence is Superoxide dismutase [Mn/Fe] (145 aa).

Fe(3+) is bound by residues histidine 10 and histidine 64. Mn(2+) is bound by residues histidine 10 and histidine 64.

This sequence belongs to the iron/manganese superoxide dismutase family. Mn(2+) is required as a cofactor. It depends on Fe(3+) as a cofactor.

The enzyme catalyses 2 superoxide + 2 H(+) = H2O2 + O2. Its function is as follows. Destroys superoxide anion radicals which are normally produced within the cells and which are toxic to biological systems. Catalyzes the dismutation of superoxide anion radicals into O2 and H2O2 by successive reduction and oxidation of the transition metal ion at the active site. The protein is Superoxide dismutase [Mn/Fe] (sodA) of Streptococcus parasanguinis.